A 110-amino-acid polypeptide reads, in one-letter code: Red pigment-concentrating prohormone (110 aa).

The signal sequence occupies residues 1–25 (MVRRTGVTLLVVALVVVALVSSVSA). Glutamine 26 carries the post-translational modification Pyrrolidone carboxylic acid. Tryptophan 33 bears the Tryptophan amide mark.

Belongs to the AKH/HRTH/RPCH family.

Its subcellular location is the secreted. Its function is as follows. This hormone adapts the animal to light backgrounds by stimulating concentration of the pigment of its red body-chromatophores. This Carcinus maenas (Common shore crab) protein is Red pigment-concentrating prohormone.